A 134-amino-acid polypeptide reads, in one-letter code: Small ribosomal subunit protein bS6 (134 aa).

It belongs to the bacterial ribosomal protein bS6 family.

Binds together with bS18 to 16S ribosomal RNA. The chain is Small ribosomal subunit protein bS6 from Chlorobium phaeobacteroides (strain BS1).